A 62-amino-acid chain; its full sequence is Photosystem II reaction center protein Z (62 aa).

2 helical membrane passes run 8 to 28 (ALFA…IVFA) and 41 to 61 (FSGT…NSLI).

It belongs to the PsbZ family. In terms of assembly, PSII is composed of 1 copy each of membrane proteins PsbA, PsbB, PsbC, PsbD, PsbE, PsbF, PsbH, PsbI, PsbJ, PsbK, PsbL, PsbM, PsbT, PsbY, PsbZ, Psb30/Ycf12, at least 3 peripheral proteins of the oxygen-evolving complex and a large number of cofactors. It forms dimeric complexes.

It is found in the plastid. The protein localises to the chloroplast thylakoid membrane. Its function is as follows. May control the interaction of photosystem II (PSII) cores with the light-harvesting antenna, regulates electron flow through the 2 photosystem reaction centers. PSII is a light-driven water plastoquinone oxidoreductase, using light energy to abstract electrons from H(2)O, generating a proton gradient subsequently used for ATP formation. This chain is Photosystem II reaction center protein Z, found in Drimys granadensis.